A 396-amino-acid polypeptide reads, in one-letter code: Imidazolonepropionase (396 aa).

Residues histidine 69 and histidine 71 each coordinate Fe(3+). Residues histidine 69 and histidine 71 each contribute to the Zn(2+) site. 4-imidazolone-5-propanoate-binding residues include arginine 78, tyrosine 136, and histidine 163. Tyrosine 136 serves as a coordination point for N-formimidoyl-L-glutamate. Histidine 224 contributes to the Fe(3+) binding site. Zn(2+) is bound at residue histidine 224. Glutamine 227 contributes to the 4-imidazolone-5-propanoate binding site. Aspartate 298 contacts Fe(3+). Aspartate 298 is a binding site for Zn(2+). Residues asparagine 300 and glycine 302 each coordinate N-formimidoyl-L-glutamate. Residue threonine 303 coordinates 4-imidazolone-5-propanoate.

Belongs to the metallo-dependent hydrolases superfamily. HutI family. It depends on Zn(2+) as a cofactor. The cofactor is Fe(3+).

It is found in the cytoplasm. It carries out the reaction 4-imidazolone-5-propanoate + H2O = N-formimidoyl-L-glutamate. It functions in the pathway amino-acid degradation; L-histidine degradation into L-glutamate; N-formimidoyl-L-glutamate from L-histidine: step 3/3. In terms of biological role, catalyzes the hydrolytic cleavage of the carbon-nitrogen bond in imidazolone-5-propanoate to yield N-formimidoyl-L-glutamate. It is the third step in the universal histidine degradation pathway. The chain is Imidazolonepropionase from Cutibacterium acnes (strain DSM 16379 / KPA171202) (Propionibacterium acnes).